The primary structure comprises 507 residues: Histidine ammonia-lyase (507 aa).

Positions 141–143 (ASG) form a cross-link, 5-imidazolinone (Ala-Gly). Serine 142 bears the 2,3-didehydroalanine (Ser) mark.

The protein belongs to the PAL/histidase family. Post-translationally, contains an active site 4-methylidene-imidazol-5-one (MIO), which is formed autocatalytically by cyclization and dehydration of residues Ala-Ser-Gly.

The protein resides in the cytoplasm. The catalysed reaction is L-histidine = trans-urocanate + NH4(+). It functions in the pathway amino-acid degradation; L-histidine degradation into L-glutamate; N-formimidoyl-L-glutamate from L-histidine: step 1/3. The chain is Histidine ammonia-lyase from Burkholderia ambifaria (strain ATCC BAA-244 / DSM 16087 / CCUG 44356 / LMG 19182 / AMMD) (Burkholderia cepacia (strain AMMD)).